A 43-amino-acid polypeptide reads, in one-letter code: Protein PsbN (43 aa).

Residues 4–24 form a helical membrane-spanning segment; sequence ATFVAIFISCLLISFTGYALY.

This sequence belongs to the PsbN family.

The protein resides in the plastid. Its subcellular location is the chloroplast thylakoid membrane. May play a role in photosystem I and II biogenesis. The chain is Protein PsbN from Marchantia polymorpha (Common liverwort).